The sequence spans 419 residues: MQKLIIYGGKPLRGSINISGAKNAVLPIMAASILTDKLHITNVPKLTDVSTMKGLLRSHGADIETIEHQDEFELIINTRNINNFTADYDIVRKMRASIWVLGPLLTKYGKAKVSLPGGCAIGARQVDLHIAVLKAMGAMIEIEGGYINASSKGRLKGTHFIFDKVSVGATINAILAAVLAEGETLLFNCGREPEIVDLCNCLIKMGADIIGVGTSEITIKGKDALNKVSYKVLSDRIEAGTYMLAAAITKGDVKICGIDYHIIENLALKLIETGIKVVPIDNGVQVIYEGKLNAVNLETNPYPGFATDLQAQFMSLMTLSSGVSMITENIFENRFMHVPELCRMGADILVRGNKAIVRGVEMLKGAEVMASDLRASVSLILAGLSTNSKTVLHRIYHLDRGFQDLEKKLSNCGADIKRV.

Residue 22–23 coordinates phosphoenolpyruvate; it reads KN. Residue Arg-95 coordinates UDP-N-acetyl-alpha-D-glucosamine. Catalysis depends on Cys-119, which acts as the Proton donor. At Cys-119 the chain carries 2-(S-cysteinyl)pyruvic acid O-phosphothioketal. Residues 164 to 167, Asp-308, and Ile-330 contribute to the UDP-N-acetyl-alpha-D-glucosamine site; that span reads KVSV.

Belongs to the EPSP synthase family. MurA subfamily.

It localises to the cytoplasm. It carries out the reaction phosphoenolpyruvate + UDP-N-acetyl-alpha-D-glucosamine = UDP-N-acetyl-3-O-(1-carboxyvinyl)-alpha-D-glucosamine + phosphate. The protein operates within cell wall biogenesis; peptidoglycan biosynthesis. Cell wall formation. Adds enolpyruvyl to UDP-N-acetylglucosamine. The protein is UDP-N-acetylglucosamine 1-carboxyvinyltransferase of Rickettsia canadensis (strain McKiel).